The following is a 466-amino-acid chain: MKPPLLVFIVCLLWLKDSHCAPTWKDKTAISENLKSFSEVGEIDADEEVKKALTGIKQMKIMMERKEKEHTNLMSTLKKCREEKQEALKLLNEVQEHLEEEERLCRESLADSWGECRSCLENNCMRIYTTCQPSWSSVKNKIERFFRKIYQFLFPFHEDNEKDLPISEKLIEEDAQLTQMEDVFSQLTVDVNSLFNRSFNVFRQMQQEFDQTFQSHFISDTDLTEPYFFPAFSKEPMTKADLEQCWDIPNFFQLFCNFSVSIYESVSETITKMLKAIEDLPKQDKAPDHGGLISKMLPGQDRGLCGELDQNLSRCFKFHEKCQKCQAHLSEDCPDVPALHTELDEAIRLVNVSNQQYGQILQMTRKHLEDTAYLVEKMRGQFGWVSELANQAPETEIIFNSIQVVPRIHEGNISKQDETMMTDLSILPSSNFTLKIPLEESAESSNFIGYVVAKALQHFKEHFKTW.

A signal peptide spans Met-1–Cys-20. The stretch at Lys-57–Asp-111 forms a coiled coil. 5 disulfides stabilise this stretch: Cys-105–Cys-333, Cys-116–Cys-325, Cys-119–Cys-322, Cys-124–Cys-315, and Cys-131–Cys-305. Asn-196, Asn-257, Asn-311, Asn-351, Asn-412, and Asn-431 each carry an N-linked (GlcNAc...) asparagine glycan.

Belongs to the clusterin family.

The protein resides in the secreted. This is Clusterin-like protein 1 (CLUL1) from Homo sapiens (Human).